The primary structure comprises 630 residues: Plastin-3 (630 aa).

EF-hand domains lie at 12-47 (DELD…ANMP) and 52-87 (KVRE…VKSS). Residues D25, N27, N29, E36, D65, N67, D69, K71, and E76 each contribute to the Ca(2+) site. 2 actin-binding regions span residues 109 to 382 (TSEL…ALTK) and 383 to 627 (PENQ…GRGM). 2 Calponin-homology (CH) domains span residues 123-239 (EEEK…KIGL) and 267-378 (LSPE…NKYP). Residues S268, S293, S326, and S339 each carry the phosphoserine modification. T391 is modified (phosphothreonine). Calponin-homology (CH) domains follow at residues 397-506 (TREE…RRYT) and 518-627 (KAND…GRGM).

As to quaternary structure, monomer.

The protein localises to the cytoplasm. Its function is as follows. Actin-bundling protein. This is Plastin-3 (PLS3) from Bos taurus (Bovine).